Reading from the N-terminus, the 1077-residue chain is Error-prone DNA polymerase (1077 aa).

It belongs to the DNA polymerase type-C family. DnaE2 subfamily.

It is found in the cytoplasm. The enzyme catalyses DNA(n) + a 2'-deoxyribonucleoside 5'-triphosphate = DNA(n+1) + diphosphate. In terms of biological role, DNA polymerase involved in damage-induced mutagenesis and translesion synthesis (TLS). It is not the major replicative DNA polymerase. This is Error-prone DNA polymerase from Brucella suis biovar 1 (strain 1330).